The primary structure comprises 249 residues: 23S rRNA (guanosine-2'-O-)-methyltransferase RlmB (249 aa).

S-adenosyl-L-methionine is bound by residues G197, I217, and L226.

Belongs to the class IV-like SAM-binding methyltransferase superfamily. RNA methyltransferase TrmH family. RlmB subfamily.

Its subcellular location is the cytoplasm. The catalysed reaction is guanosine(2251) in 23S rRNA + S-adenosyl-L-methionine = 2'-O-methylguanosine(2251) in 23S rRNA + S-adenosyl-L-homocysteine + H(+). Specifically methylates the ribose of guanosine 2251 in 23S rRNA. In Ralstonia nicotianae (strain ATCC BAA-1114 / GMI1000) (Ralstonia solanacearum), this protein is 23S rRNA (guanosine-2'-O-)-methyltransferase RlmB.